The sequence spans 865 residues: MGSRASNSPSFSSKAETLLPSEYKKNAVKKETIRNGKKRKLPDTESSDPEFASRRLIANETGTDAVSNGNKNDSNANNNNNNNNKKSSEVMHQACDACRKKKWKCSKTVPTCTNCLKYNLDCVYSPQVVRTPLTRAHLTEMENRVAELEQFLKELFPVWDIDRLLQQKDTYRIRELLTMGSTNTVPGLASNNIDSSLEQPVAFGTAQPAQSLSTDPAVQSQAYPMQPVPMTELQSITNLRHTPSLLDEQQMNTISTATLRNMYSSGNNNNNLGNISGLSPVTEAFFRWQEGETSIDNSYFGKGSILFWLNQLLSSEKIAGVTSKVGNDINTNNNNINHQKLPLILNNNITHNVSDITTTSTSSNKRAMSPLSANDSVYLAKRETISAYIDAYFKHYHALYPLVSKEMFFAQYNDQIKPENVEIWHILLNAVLALGSWCSNSCSSHHTLYYQNALSYLSTAVLETGSTDLTIALILLTHYVQKMHKPNTAWSLIGLCSHMATSLGLHRDLPNSTIHDQQLRRVLWWTIYCTGCDLSLETGRPSLLPNLQAIDIPLPASSATIKEPSIYSSIIQESQWSQILQQKLSNNSYQQSAGECLSWFDSVQAFLDHWPTPSTEAELKALNETQLDWLPLVKFRPYWMFHCSLISLFSVFFEEDAPTDNNVIRCKELCLQLSSRNIFSVATFVRSYAFNSLSCWYATHYLVRSALVPLHFASRISPQHALWETVKAQLLSAHEAMGILSQESSLAAKFDGILTKNYSEILQREGINKSQLMPPPTPLLQSTSFSDLLSLWSANAEDAPRVSNSQMPQSITITDSLLQSSTTQMRPPTTSGWPDTNNFLNPSTQQLFNTTTMDDVYNYIFDNDE.

The span at 1–15 shows a compositional bias: polar residues; sequence MGSRASNSPSFSSKA. The disordered stretch occupies residues 1-87; that stretch reads MGSRASNSPS…NNNNNNNKKS (87 aa). Positions 22-34 are enriched in basic and acidic residues; that stretch reads EYKKNAVKKETIR. A compositionally biased stretch (low complexity) spans 67–85; that stretch reads SNGNKNDSNANNNNNNNNK. 6 residues coordinate Zn(2+): cysteine 95, cysteine 98, cysteine 105, cysteine 112, cysteine 115, and cysteine 122. A DNA-binding region (zn(2)-C6 fungal-type) is located at residues 95–122; the sequence is CDACRKKKWKCSKTVPTCTNCLKYNLDC. Residues 818–840 are disordered; it reads LQSSTTQMRPPTTSGWPDTNNFL.

Its subcellular location is the nucleus. Positive regulatory protein, that controls induction of the lactose-galactose regulation of Kluyveromyces lactis. The polypeptide is Lactose regulatory protein LAC9 (LAC9) (Kluyveromyces lactis (strain ATCC 8585 / CBS 2359 / DSM 70799 / NBRC 1267 / NRRL Y-1140 / WM37) (Yeast)).